Here is a 320-residue protein sequence, read N- to C-terminus: Cytochrome f (320 aa).

An N-terminal signal peptide occupies residues 1–35 (MQTRNTFSWIREEITRSISVSLMIYIITWASISSA). Tyr-36, Cys-56, Cys-59, and His-60 together coordinate heme. A helical transmembrane segment spans residues 286-306 (VQGLLFFLGSVVLAQIFLVLK).

This sequence belongs to the cytochrome f family. The 4 large subunits of the cytochrome b6-f complex are cytochrome b6, subunit IV (17 kDa polypeptide, petD), cytochrome f and the Rieske protein, while the 4 small subunits are PetG, PetL, PetM and PetN. The complex functions as a dimer. Heme is required as a cofactor.

It is found in the plastid. It localises to the chloroplast thylakoid membrane. Functionally, component of the cytochrome b6-f complex, which mediates electron transfer between photosystem II (PSII) and photosystem I (PSI), cyclic electron flow around PSI, and state transitions. This chain is Cytochrome f, found in Lepidium virginicum (Virginia pepperweed).